The following is a 312-amino-acid chain: sn-1-specific diacylglycerol lipase ABHD11 (312 aa).

The N-terminal 14 residues, 1-14 (MITFKSFHCSRGWH), are a transit peptide targeting the mitochondrion. Residues 62-297 (PPLVLLHGLF…GAGHWVHADK (236 aa)) enclose the AB hydrolase-1 domain. Residues serine 136, glutamate 232, and histidine 291 each act as charge relay system in the active site.

This sequence belongs to the AB hydrolase superfamily. In terms of processing, phosphorylated.

Its subcellular location is the mitochondrion. The protein resides in the mitochondrion matrix. It catalyses the reaction 1-octadecanoyl-2-(5Z,8Z,11Z,14Z-eicosatetraenoyl)-sn-glycerol + H2O = 2-(5Z,8Z,11Z,14Z-eicosatetraenoyl)-glycerol + octadecanoate + H(+). It carries out the reaction a 1,2-diacyl-sn-glycerol + H2O = a 2-acylglycerol + a fatty acid + H(+). The catalysed reaction is a 1,3-diacyl-sn-glycerol + H2O = a 1-acyl-sn-glycerol + a fatty acid + H(+). The enzyme catalyses 1-octadecanoyl-2-(9Z-octadecenoyl)-sn-glycerol + H2O = 2-(9Z-octadecenoyl)-glycerol + octadecanoate + H(+). It catalyses the reaction 1-octadecanoyl-2-(4Z,7Z,10Z,13Z,16Z,19Z-docosahexaenoyl)-sn-glycerol + H2O = 2-(4Z,7Z,10Z,13Z,16Z,19Z-docosahexaenoyl)-glycerol + octadecanoate + H(+). It carries out the reaction 1,2-didecanoylglycerol + H2O = decanoylglycerol + decanoate + H(+). Catalyzes the hydrolysis of diacylglycerol in vitro and may function as a key regulator in lipid metabolism, namely by regulating the intracellular levels of diacylglycerol. 1,2-diacyl-sn-glycerols are the preferred substrate over 1,3-diacyl-sn-glycerols. The enzyme hydrolyzes stearate in preference to palmitate from the sn-1 position of 1,2-diacyl-sn-glycerols. This is sn-1-specific diacylglycerol lipase ABHD11 from Xenopus laevis (African clawed frog).